Consider the following 107-residue polypeptide: Bombesin (107 aa).

The first 26 residues, 1-26, serve as a signal peptide directing secretion; it reads MSAIPLNRILPLGFLLIFSFISLSSC. Positions 27–41 are excised as a propeptide; it reads MEFVEDPNNQGGLNL. Q42 is subject to Pyrrolidone carboxylic acid. M55 carries the post-translational modification Methionine amide. Residues 56 to 107 constitute a propeptide that is removed on maturation; that stretch reads GKKSLQDTDFEEMESFAKRNVENMKAESERELRHAQLVVRNILEQYLKNMQN.

In terms of tissue distribution, expressed by the skin glands.

It localises to the secreted. Stimulates smooth muscle contraction. Role in induction of hypothermia, stimulation of DNA replication and release of many gastrointestinal hormones. Possesses insulin-releasing activity. The chain is Bombesin from Bombina variegata (Yellow-bellied toad).